We begin with the raw amino-acid sequence, 893 residues long: Probable disease resistance protein At1g62630 (893 aa).

Residues 24 to 68 (GSYTHNLEKNLVALETTMEELKAKRDDLLRRLKREEDRGLQRLSE) adopt a coiled-coil conformation. The region spanning 136–440 (TEQASTSAFE…CEEIIDGSEG (305 aa)) is the NB-ARC domain. 179 to 186 (GMGGVGKT) is an ATP binding site. 6 LRR repeats span residues 516-537 (VVRR…YECM), 538-559 (ELTT…SEIK), 571-593 (KLAV…ISNL), 595-617 (SLKY…QELK), 618-640 (KIIH…SSLH), and 641-663 (NLKV…KELE).

The protein belongs to the disease resistance NB-LRR family.

Functionally, probable disease resistance protein. The sequence is that of Probable disease resistance protein At1g62630 from Arabidopsis thaliana (Mouse-ear cress).